The following is a 41-amino-acid chain: Large ribosomal subunit protein bL36B (41 aa).

It belongs to the bacterial ribosomal protein bL36 family.

The polypeptide is Large ribosomal subunit protein bL36B (Neisseria meningitidis serogroup B (strain ATCC BAA-335 / MC58)).